Reading from the N-terminus, the 449-residue chain is 23S rRNA (uracil(1939)-C(5))-methyltransferase RlmD (449 aa).

A TRAM domain is found at 15-73; sequence KAIPAKNLTVTVTSLDPFGQGVARHEGKTVFVTGVLPGEQAEVQLTEDKRQFSHAKLKR. C86, C92, C95, and C173 together coordinate [4Fe-4S] cluster. S-adenosyl-L-methionine-binding residues include Q276, F305, N310, E326, N353, and D374. C400 (nucleophile) is an active-site residue.

It belongs to the class I-like SAM-binding methyltransferase superfamily. RNA M5U methyltransferase family. RlmD subfamily.

It carries out the reaction uridine(1939) in 23S rRNA + S-adenosyl-L-methionine = 5-methyluridine(1939) in 23S rRNA + S-adenosyl-L-homocysteine + H(+). Its function is as follows. Catalyzes the formation of 5-methyl-uridine at position 1939 (m5U1939) in 23S rRNA. The sequence is that of 23S rRNA (uracil(1939)-C(5))-methyltransferase RlmD from Pectobacterium carotovorum subsp. carotovorum (strain PC1).